A 388-amino-acid chain; its full sequence is Glucose-6-phosphate/phosphate translocator 2, chloroplastic (388 aa).

The N-terminal 68 residues, 1–68 (MLSSIKPSSS…SASNFKREVK (68 aa)), are a transit peptide targeting the chloroplast. 8 consecutive transmembrane segments (helical) span residues 95 to 115 (LKIGIYFATWWALNVVFNIYN), 122 to 142 (FPYPWLTSTLSLACGSLMMLV), 158 to 178 (FWKTLFPVAVAHTIGHVAATV), 211 to 231 (FPLPVYLSLLPIIGGCALAAI), 233 to 253 (ELNFNITGFMGAMISNLAFVF), 281 to 301 (LVILTPFSIAVEGPQMWAAGW), 305 to 325 (VSQVGPNFVWWVVAQSVFYHL), and 358 to 378 (IIIFHTPIQPVNALGAAIAIF). The EamA domain occupies 113–231 (IYNKKVLNAF…IIGGCALAAI (119 aa)).

This sequence belongs to the TPT transporter family. GPT (TC 2.A.7.9) subfamily. As to expression, expressed in seeds, flowers, stamens, and rosette leaves, with highest levels found in sepals and senescing leaves.

The protein resides in the plastid. The protein localises to the chloroplast membrane. In terms of biological role, glucose 6-phosphate (Glc6P) transporter. Also transports inorganic phosphate, 3-phosphoglycerate, triose phosphates and, to a leser extent, phosphoenolpyruvate. Responsible for the transport of Glc6P into plastids of heterotrophic tissues where it can be used as a carbon source for starch biosynthesis, as substrate for fatty acid biosynthesis or as substrate for NADPH generation via the oxidative pentose phosphate pathway (OPPP). Required for dynamic acclimation of photosynthesis and partitioning of Glc6P between the chloroplast and the cytosol. May modulate the sensing of sugar status during early seedling development. This chain is Glucose-6-phosphate/phosphate translocator 2, chloroplastic, found in Arabidopsis thaliana (Mouse-ear cress).